The chain runs to 227 residues: Cytidylate kinase (227 aa).

12–20 (GPSGAGKGT) serves as a coordination point for ATP.

This sequence belongs to the cytidylate kinase family. Type 1 subfamily.

It is found in the cytoplasm. The catalysed reaction is CMP + ATP = CDP + ADP. It catalyses the reaction dCMP + ATP = dCDP + ADP. The protein is Cytidylate kinase of Sodalis glossinidius (strain morsitans).